Consider the following 390-residue polypeptide: Neutrophil cytosol factor 1 (390 aa).

Positions 4–125 (TFIRHIALLG…DFFKVRPDDL (122 aa)) constitute a PX domain. 2 consecutive SH3 domains span residues 156–215 (IILQ…PLDS) and 226–285 (YAGE…KAGE). The interval 291–390 (QRQIRGRGAP…STKRKLTSAV (100 aa)) is disordered. Phosphoserine occurs at positions 304, 321, 329, and 346. Residues 374–383 (ILHRCTESTK) are compositionally biased toward basic and acidic residues.

As to quaternary structure, component of the phagocyte NADPH oxidase complex composed of an obligatory core heterodimer formed by the membrane proteins CYBA and CYBB and the cytosolic regulatory subunits NCF1/p47-phox, NCF2/p67-phox, NCF4/p40-phox and the small GTPase RAC1 or RAC2. Part of a cytosolic complex composed at least by NCF1, NCF2 and NCF4. Interacts (via C-terminus) with NCF2 (via the C-terminal SH3 domain). Interacts with NCF4. Interacts with CYBB. Interacts (via the second SH3 domain) with CYBA; interaction is phosphorylation-dependent. Interacts with NOXA1. Interacts with ADAM15. Interacts with TRAF4. Interacts with FASLG. Interacts with PARK7 (via C-terminus); the interaction is enhanced by LPS and modulates NCF1 phosphorylation and membrane translocation. Post-translationally, phosphorylated by PRKCD; phosphorylation induces activation of NCF1, leading to assembly and activation of the NADPH oxidase complex.

The protein localises to the cytoplasm. It is found in the cytosol. It localises to the membrane. Subunit of the phagocyte NADPH oxidase complex that mediates the transfer of electrons from cytosolic NADPH to O2 to produce the superoxide anion (O2(-)). In the activated complex, electrons are first transferred from NADPH to flavin adenine dinucleotide (FAD) and subsequently transferred via two heme molecules to molecular oxygen, producing superoxide through an outer-sphere reaction. Activation of the NADPH oxidase complex is initiated by the assembly of cytosolic subunits of the NADPH oxidase complex with the core NADPH oxidase complex to form a complex at the plasma membrane or phagosomal membrane. This activation process is initiated by phosphorylation dependent binding of the cytosolic NCF1/p47-phox subunit to the C-terminus of CYBA/p22-phox. This Mus musculus (Mouse) protein is Neutrophil cytosol factor 1.